Consider the following 100-residue polypeptide: NADH-quinone oxidoreductase subunit K (100 aa).

3 helical membrane passes run 4–24 (LNYG…SLLI), 29–49 (IFIL…FILI), and 60–80 (VLYI…LAIF).

The protein belongs to the complex I subunit 4L family. NDH-1 is composed of 13 different subunits. Subunits NuoA, H, J, K, L, M, N constitute the membrane sector of the complex.

The protein resides in the cell membrane. It catalyses the reaction a quinone + NADH + 5 H(+)(in) = a quinol + NAD(+) + 4 H(+)(out). NDH-1 shuttles electrons from NADH, via FMN and iron-sulfur (Fe-S) centers, to quinones in the respiratory chain. The immediate electron acceptor for the enzyme in this species is believed to be ubiquinone. Couples the redox reaction to proton translocation (for every two electrons transferred, four hydrogen ions are translocated across the cytoplasmic membrane), and thus conserves the redox energy in a proton gradient. This is NADH-quinone oxidoreductase subunit K from Buchnera aphidicola subsp. Cinara cedri (strain Cc).